The following is a 589-amino-acid chain: Glutamine--fructose-6-phosphate aminotransferase [isomerizing] (589 aa).

Cysteine 2 acts as the Nucleophile; for GATase activity in catalysis. The 220-residue stretch at 2 to 221 (CGIIGIVSLR…DDELGFITPE (220 aa)) folds into the Glutamine amidotransferase type-2 domain. SIS domains are found at residues 286-426 (VIEE…KMEK) and 445-579 (IGEE…PDKP). Lysine 584 serves as the catalytic For Fru-6P isomerization activity.

As to quaternary structure, homodimer.

It is found in the cytoplasm. The catalysed reaction is D-fructose 6-phosphate + L-glutamine = D-glucosamine 6-phosphate + L-glutamate. Its function is as follows. Catalyzes the first step in hexosamine metabolism, converting fructose-6P into glucosamine-6P using glutamine as a nitrogen source. This is Glutamine--fructose-6-phosphate aminotransferase [isomerizing] from Sulfurisphaera tokodaii (strain DSM 16993 / JCM 10545 / NBRC 100140 / 7) (Sulfolobus tokodaii).